The chain runs to 179 residues: Large ribosomal subunit protein uL5 (179 aa).

The protein belongs to the universal ribosomal protein uL5 family. Part of the 50S ribosomal subunit; part of the 5S rRNA/L5/L18/L25 subcomplex. Contacts the 5S rRNA and the P site tRNA. Forms a bridge to the 30S subunit in the 70S ribosome.

This is one of the proteins that bind and probably mediate the attachment of the 5S RNA into the large ribosomal subunit, where it forms part of the central protuberance. In the 70S ribosome it contacts protein S13 of the 30S subunit (bridge B1b), connecting the 2 subunits; this bridge is implicated in subunit movement. Contacts the P site tRNA; the 5S rRNA and some of its associated proteins might help stabilize positioning of ribosome-bound tRNAs. In Francisella tularensis subsp. novicida (strain U112), this protein is Large ribosomal subunit protein uL5.